The chain runs to 98 residues: DNA-binding protein Fis (98 aa).

Residues Gln74–Lys93 constitute a DNA-binding region (H-T-H motif).

Belongs to the transcriptional regulatory Fis family. In terms of assembly, homodimer.

In terms of biological role, activates ribosomal RNA transcription. Plays a direct role in upstream activation of rRNA promoters. The chain is DNA-binding protein Fis from Histophilus somni (strain 2336) (Haemophilus somnus).